We begin with the raw amino-acid sequence, 692 residues long: MADRKTPLHMVRNIGIAAHIDAGKTTTSERILFFTGMSHKIGEVHDGAATMDWMEQEKERGITITSAATTCFWKQHQINLIDTPGHVDFTIEVERSMRVLDGAVAVFCSVGGVQPQSETVWRQANKYHVPRIVFVNKMDRIGANFYNVESQIRNRLKANPVPIQIPIGAEDDFKGVIDLVRMKAYVWEDDKKPTDYVEKEIPAELLEKAQEYRAKLIEAVSETDDSLMEKFFSGEELSEEEIKKGIKAGCLRMSIIPMLCGTAFKNKGIQPLLNAVVDYLPAPDEIEAIKGVYEDGTEVTVESTDDGEFAALAFKIMTDPFVGQLTFIRVYRGSLESGSYAYNTVQDSKERIGRLLKMHSNKREEISVLHAGEIGAVVGLKNTLTGDTLASEKDKVILEKMDFPEPVISVAVEPKTKADQEKMAIALQKLAQEDPSFRVNTDEESGQTIISGMGELHLEIIVDRMLREFKVDAEVGQPQVAYRETIRKPVEQEYKYAKQSGGRGQYGHVFLRIEPLEPASGFEFVNDIKGGVVPKEYIPAVEKGCREALQNGVLAGYPVEDVKVTLYDGSYHEVDSSEMAFKLAASMGFKEGARKANPVILEPMMKVEVETPEEYMGDVIGDLNKRRGQVSSMDERNGSKIITAFCPLAQMFGYSTDLRSGTQGRATYSMEFDHYEEVPKNVSEEIIKKRNG.

The tr-type G domain maps to 9 to 284; sequence HMVRNIGIAA…AVVDYLPAPD (276 aa). GTP contacts are provided by residues 18-25, 82-86, and 136-139; these read AHIDAGKT, DTPGH, and NKMD.

Belongs to the TRAFAC class translation factor GTPase superfamily. Classic translation factor GTPase family. EF-G/EF-2 subfamily.

It is found in the cytoplasm. Its function is as follows. Catalyzes the GTP-dependent ribosomal translocation step during translation elongation. During this step, the ribosome changes from the pre-translocational (PRE) to the post-translocational (POST) state as the newly formed A-site-bound peptidyl-tRNA and P-site-bound deacylated tRNA move to the P and E sites, respectively. Catalyzes the coordinated movement of the two tRNA molecules, the mRNA and conformational changes in the ribosome. This chain is Elongation factor G, found in Campylobacter curvus (strain 525.92).